A 149-amino-acid polypeptide reads, in one-letter code: Protein K7 (149 aa).

The protein belongs to the orthopoxvirus OPG044 family. In terms of assembly, interacts with DDX3; this interaction inhibits DDX3 and suppresses DDX3-mediated IFN-beta promoter induction. Interacts with TRAF6 and IRAK2; these interactions suppress TLR-dependent NF-KappaB activation.

It localises to the host cytoplasm. Virulence factor that affects the acute immune response to infection. Bcl-2-like protein which, through its interaction with the DEAD box RNA helicase DDX3X/DDX3, prevents TBK1/IKKepsilon-mediated IRF3 activation. Contributes to virulence by binding to the host TRAF6 and IRAK2 and preventing host NF-kappa-B activation. The polypeptide is Protein K7 (OPG044) (Homo sapiens (Human)).